A 122-amino-acid chain; its full sequence is NADH-quinone oxidoreductase subunit A (122 aa).

Helical transmembrane passes span 10–30, 66–86, and 91–111; these read MIVLIFLLLGILLPVVALTLG, IFALLFVIFDVETLFLYPWAV, and LGLFALIEMLIFVVMLLVGLA.

This sequence belongs to the complex I subunit 3 family. As to quaternary structure, NDH-1 is composed of 14 different subunits. Subunits NuoA, H, J, K, L, M, N constitute the membrane sector of the complex.

The protein localises to the cell membrane. It carries out the reaction a quinone + NADH + 5 H(+)(in) = a quinol + NAD(+) + 4 H(+)(out). NDH-1 shuttles electrons from NADH, via FMN and iron-sulfur (Fe-S) centers, to quinones in the respiratory chain. The immediate electron acceptor for the enzyme in this species is believed to be a menaquinone. Couples the redox reaction to proton translocation (for every two electrons transferred, four hydrogen ions are translocated across the cytoplasmic membrane), and thus conserves the redox energy in a proton gradient. This is NADH-quinone oxidoreductase subunit A from Bacillus cereus (strain ATCC 14579 / DSM 31 / CCUG 7414 / JCM 2152 / NBRC 15305 / NCIMB 9373 / NCTC 2599 / NRRL B-3711).